A 597-amino-acid chain; its full sequence is MHRYRSHHCAALRKCDVGTKVRLSGWVHRVRDHGGILFVDLRDHFGITQIVADPASPAFKVIEKVRSEWVIRVDGEVCARSDEVINATLPTGEIEIFVQEVEILSKSEELPLPVFGEPDYPEDIRLKYRFLDLRRETMHKNIMRRTEIIAAMRRAMQNNGFTEFSTPLLTASSPEGARDFLVPSRVHQGKFYALPQAPQQYKQLLMMSGFDRYFQIAPCFRDEDPRADRLPGEFYQLDVEMSFVEQEDVLATMEPIMRSIFEEFANGKTVTQNFPRISYDEAIQKYGSDKPDLRNPIIMEDVSQHFYNSGFKVFAQILADDENAQVWAIPAKTGGSRAFCDRMNVWAQGEGQPGLGYIFWRKEEEKFEGAGPIAKNIGEQRTEALRIQLGLENGDACFFVAGDPKKFASFAGAARTRVGEELDLVDRECFSLAWIVDFPFFEWNEDEKKIDFAHNPFSMPQGGENALECQDPLTLKAFQYDLVCNGYEIASGGIRNHLPEMMLKVFELVGLSKKVVKDRFGALYRAFHYGAPPHGGMAAGIDRIIMLLQGVKNLREVALFPMNQQALDLLMNAPSDVSSTQLRDLGIRMAPTQKNSS.

Position 175 (Glu-175) interacts with L-aspartate. Residues 199-202 (QQYK) are aspartate. L-aspartate contacts are provided by Arg-221 and His-454. ATP is bound at residue 221-223 (RDE). Glu-488 contributes to the ATP binding site. Arg-495 is an L-aspartate binding site. 540–543 (GIDR) is a binding site for ATP.

This sequence belongs to the class-II aminoacyl-tRNA synthetase family. Type 1 subfamily. Homodimer.

It localises to the cytoplasm. The catalysed reaction is tRNA(Asx) + L-aspartate + ATP = L-aspartyl-tRNA(Asx) + AMP + diphosphate. Aspartyl-tRNA synthetase with relaxed tRNA specificity since it is able to aspartylate not only its cognate tRNA(Asp) but also tRNA(Asn). Reaction proceeds in two steps: L-aspartate is first activated by ATP to form Asp-AMP and then transferred to the acceptor end of tRNA(Asp/Asn). This is Aspartate--tRNA(Asp/Asn) ligase from Bartonella tribocorum (strain CIP 105476 / IBS 506).